We begin with the raw amino-acid sequence, 130 residues long: Small ribosomal subunit protein uS9 (130 aa).

The disordered stretch occupies residues 109–130 (RKKERKKYGQRAARARYQYSKR).

It belongs to the universal ribosomal protein uS9 family.

The polypeptide is Small ribosomal subunit protein uS9 (Nitratidesulfovibrio vulgaris (strain DSM 19637 / Miyazaki F) (Desulfovibrio vulgaris)).